A 444-amino-acid chain; its full sequence is N-succinylarginine dihydrolase (444 aa).

Substrate-binding positions include 19 to 28, N110, and 137 to 138; these read SGLSVGNIAS and HR. Residue E174 is part of the active site. R214 serves as a coordination point for substrate. H250 is an active-site residue. Residues D252 and N362 each coordinate substrate. Residue C368 is the Nucleophile of the active site.

This sequence belongs to the succinylarginine dihydrolase family. As to quaternary structure, homodimer.

The catalysed reaction is N(2)-succinyl-L-arginine + 2 H2O + 2 H(+) = N(2)-succinyl-L-ornithine + 2 NH4(+) + CO2. The protein operates within amino-acid degradation; L-arginine degradation via AST pathway; L-glutamate and succinate from L-arginine: step 2/5. Functionally, catalyzes the hydrolysis of N(2)-succinylarginine into N(2)-succinylornithine, ammonia and CO(2). The chain is N-succinylarginine dihydrolase from Aliivibrio fischeri (strain ATCC 700601 / ES114) (Vibrio fischeri).